Consider the following 143-residue polypeptide: Probable cyclic pyranopterin monophosphate synthase (143 aa).

Substrate is bound by residues Tyr-61 to His-63 and Met-97 to Glu-98. Residue Asp-112 is part of the active site.

It belongs to the MoaC family. As to quaternary structure, homohexamer; trimer of dimers.

The catalysed reaction is (8S)-3',8-cyclo-7,8-dihydroguanosine 5'-triphosphate = cyclic pyranopterin phosphate + diphosphate. Its pathway is cofactor biosynthesis; molybdopterin biosynthesis. Catalyzes the conversion of (8S)-3',8-cyclo-7,8-dihydroguanosine 5'-triphosphate to cyclic pyranopterin monophosphate (cPMP). This chain is Probable cyclic pyranopterin monophosphate synthase, found in Thermoplasma acidophilum (strain ATCC 25905 / DSM 1728 / JCM 9062 / NBRC 15155 / AMRC-C165).